Reading from the N-terminus, the 244-residue chain is Thaumatin-like protein 1 (244 aa).

Positions 1–22 (MKFEALIGLVLVFLSEHAGVYS) are cleaved as a signal peptide. 8 disulfide bridges follow: Cys-31–Cys-243, Cys-79–Cys-89, Cys-94–Cys-101, Cys-149–Cys-232, Cys-154–Cys-215, Cys-162–Cys-178, Cys-182–Cys-191, and Cys-192–Cys-202. An N-linked (GlcNAc...) asparagine glycan is attached at Asn-150.

The protein belongs to the thaumatin family. Post-translationally, N-glycosylated. In terms of tissue distribution, style.

It is found in the secreted. The polypeptide is Thaumatin-like protein 1 (TL1) (Pyrus pyrifolia (Chinese pear)).